The primary structure comprises 158 residues: D-aminoacyl-tRNA deacylase (158 aa).

The Gly-cisPro motif, important for rejection of L-amino acids motif lies at 144–145 (GP).

The protein belongs to the DTD family. Homodimer.

It is found in the cytoplasm. It catalyses the reaction glycyl-tRNA(Ala) + H2O = tRNA(Ala) + glycine + H(+). The enzyme catalyses a D-aminoacyl-tRNA + H2O = a tRNA + a D-alpha-amino acid + H(+). An aminoacyl-tRNA editing enzyme that deacylates mischarged D-aminoacyl-tRNAs. Also deacylates mischarged glycyl-tRNA(Ala), protecting cells against glycine mischarging by AlaRS. Acts via tRNA-based rather than protein-based catalysis; rejects L-amino acids rather than detecting D-amino acids in the active site. By recycling D-aminoacyl-tRNA to D-amino acids and free tRNA molecules, this enzyme counteracts the toxicity associated with the formation of D-aminoacyl-tRNA entities in vivo and helps enforce protein L-homochirality. This Corynebacterium kroppenstedtii (strain DSM 44385 / JCM 11950 / CIP 105744 / CCUG 35717) protein is D-aminoacyl-tRNA deacylase.